Consider the following 359-residue polypeptide: MGEFKVDKFNIEDFFSGDLDIFNYSSGMPSILPDAVPCHSENLEINSYAVVVIYVLVTLLSLVGNSLVMLVILYNRSTCSVTDVYLLNLAIADLFFALTLPVWAASKVNGWTFGSTLCKIFSYVKEVTFYSSVLLLACISMDRYLAIVHATSTLIQKRHLVKFVCIAMWLLSVILALPILILRNPVKVNLSTLVCYEDVGNNTSRLRVVLRILPQTFGFLVPLLIMLFCYGFTLRTLFKAHMGQKHRAMRVIFAVVLVFLLCWLPYNLVLFTDTLMRTKLIKETCERRDDIDKALNATEILGFLHSCLNPIIYAFIGQKFRHGLLKIMATYGLVSKEFLAKEGRPSFVSSSSANTSTTL.

Over 1–47 (MGEFKVDKFNIEDFFSGDLDIFNYSSGMPSILPDAVPCHSENLEINS) the chain is Extracellular. Asparagine 23 carries N-linked (GlcNAc...) asparagine glycosylation. A helical membrane pass occupies residues 48–74 (YAVVVIYVLVTLLSLVGNSLVMLVILY). Residues 75–83 (NRSTCSVTD) lie on the Cytoplasmic side of the membrane. Residues 84–104 (VYLLNLAIADLFFALTLPVWA) traverse the membrane as a helical segment. Over 105–119 (ASKVNGWTFGSTLCK) the chain is Extracellular. Cysteines 118 and 195 form a disulfide. A helical transmembrane segment spans residues 120 to 141 (IFSYVKEVTFYSSVLLLACISM). Over 142–162 (DRYLAIVHATSTLIQKRHLVK) the chain is Cytoplasmic. A helical transmembrane segment spans residues 163 to 182 (FVCIAMWLLSVILALPILIL). The Extracellular portion of the chain corresponds to 183–207 (RNPVKVNLSTLVCYEDVGNNTSRLR). Residues 208 to 230 (VVLRILPQTFGFLVPLLIMLFCY) traverse the membrane as a helical segment. At 231–250 (GFTLRTLFKAHMGQKHRAMR) the chain is on the cytoplasmic side. Residues 251 to 272 (VIFAVVLVFLLCWLPYNLVLFT) traverse the membrane as a helical segment. The Extracellular segment spans residues 273 to 293 (DTLMRTKLIKETCERRDDIDK). The helical transmembrane segment at 294 to 314 (ALNATEILGFLHSCLNPIIYA) threads the bilayer. The Cytoplasmic segment spans residues 315-359 (FIGQKFRHGLLKIMATYGLVSKEFLAKEGRPSFVSSSSANTSTTL).

Belongs to the G-protein coupled receptor 1 family. In terms of assembly, interacts with IL8. Interacts with GNAI2. Post-translationally, phosphorylated upon ligand binding; which is required for desensitization.

It is found in the cell membrane. Functionally, receptor for interleukin-8 which is a powerful neutrophil chemotactic factor. Binding of IL-8 to the receptor causes activation of neutrophils. This response is mediated via a G-protein that activates a phosphatidylinositol-calcium second messenger system. Binds to IL-8 with high affinity. Also binds with high affinity to CXCL3, GRO/MGSA and NAP-2. This chain is C-X-C chemokine receptor type 2 (Cxcr2), found in Mus musculus (Mouse).